A 227-amino-acid chain; its full sequence is Cytochrome c oxidase subunit 2 (227 aa).

Topologically, residues 1 to 14 are mitochondrial intermembrane; the sequence is MAYPFQLGLQDATS. A helical transmembrane segment spans residues 15–45; that stretch reads PIMEELTNFHDHTLMIVFLISTLVLYIISLM. The Mitochondrial matrix segment spans residues 46–59; it reads LTTKLTHTSTMDAQ. A helical membrane pass occupies residues 60 to 87; that stretch reads EVETIWTILPAVILILIALPSLRILYMM. The Mitochondrial intermembrane segment spans residues 88-227; it reads DEINNPALTV…YFEDWSASMI (140 aa). Positions 161, 196, 198, 200, 204, and 207 each coordinate Cu cation. Glu198 contacts Mg(2+). At Tyr218 the chain carries Phosphotyrosine.

Belongs to the cytochrome c oxidase subunit 2 family. As to quaternary structure, component of the cytochrome c oxidase (complex IV, CIV), a multisubunit enzyme composed of 14 subunits. The complex is composed of a catalytic core of 3 subunits MT-CO1, MT-CO2 and MT-CO3, encoded in the mitochondrial DNA, and 11 supernumerary subunits COX4I, COX5A, COX5B, COX6A, COX6B, COX6C, COX7A, COX7B, COX7C, COX8 and NDUFA4, which are encoded in the nuclear genome. The complex exists as a monomer or a dimer and forms supercomplexes (SCs) in the inner mitochondrial membrane with NADH-ubiquinone oxidoreductase (complex I, CI) and ubiquinol-cytochrome c oxidoreductase (cytochrome b-c1 complex, complex III, CIII), resulting in different assemblies (supercomplex SCI(1)III(2)IV(1) and megacomplex MCI(2)III(2)IV(2)). Found in a complex with TMEM177, COA6, COX18, COX20, SCO1 and SCO2. Interacts with TMEM177 in a COX20-dependent manner. Interacts with COX20. Interacts with COX16. Cu cation is required as a cofactor.

Its subcellular location is the mitochondrion inner membrane. The catalysed reaction is 4 Fe(II)-[cytochrome c] + O2 + 8 H(+)(in) = 4 Fe(III)-[cytochrome c] + 2 H2O + 4 H(+)(out). In terms of biological role, component of the cytochrome c oxidase, the last enzyme in the mitochondrial electron transport chain which drives oxidative phosphorylation. The respiratory chain contains 3 multisubunit complexes succinate dehydrogenase (complex II, CII), ubiquinol-cytochrome c oxidoreductase (cytochrome b-c1 complex, complex III, CIII) and cytochrome c oxidase (complex IV, CIV), that cooperate to transfer electrons derived from NADH and succinate to molecular oxygen, creating an electrochemical gradient over the inner membrane that drives transmembrane transport and the ATP synthase. Cytochrome c oxidase is the component of the respiratory chain that catalyzes the reduction of oxygen to water. Electrons originating from reduced cytochrome c in the intermembrane space (IMS) are transferred via the dinuclear copper A center (CU(A)) of subunit 2 and heme A of subunit 1 to the active site in subunit 1, a binuclear center (BNC) formed by heme A3 and copper B (CU(B)). The BNC reduces molecular oxygen to 2 water molecules using 4 electrons from cytochrome c in the IMS and 4 protons from the mitochondrial matrix. The chain is Cytochrome c oxidase subunit 2 (MT-CO2) from Hybomys univittatus (Peter's striped mouse).